Reading from the N-terminus, the 464-residue chain is MPAEMQAPQWLLLLLVILPATGSDPVLCFTQYEESSGRCKGLLGRDIRVEDCCLNAAYAFQEHDGGLCQACRSPQWSAWSLWGPCSVTCSEGSQLRHRRCVGRGGQCSENVAPGTLEWQLQACEDQPCCPEMGGWSEWGPWGPCSVTCSKGTQIRQRVCDNPAPKCGGHCPGEAQQSQACDTQKTCPTHGAWASWGPWSPCSGSCLGGAQEPKETRSRSCSAPAPSHQPPGKPCSGPAYEHKACSGLPPCPVAGGWGPWSPLSPCSVTCGLGQTLEQRTCDHPAPRHGGPFCAGDATRNQMCNKAVPCPVNGEWEAWGKWSDCSRLRMSINCEGTPGQQSRSRSCGGRKFNGKPCAGKLQDIRHCYNIHNCIMKGSWSQWSTWSLCTPPCSPNATRVRQRLCTPLLPKYPPTVSMVEGQGEKNVTFWGTPRPLCEALQGQKLVVEEKRSCLHVPVCKDPEEKKP.

Positions 1–22 are cleaved as a signal peptide; it reads MPAEMQAPQWLLLLLVILPATG. TSP type-1 domains follow at residues 24 to 72, 73 to 130, 132 to 187, 189 to 251, 253 to 309, 311 to 372, and 374 to 457; these read DPVL…QACR, SPQW…PCCP, MGGW…KTCP, HGAW…PPCP, AGGW…VPCP, NGEW…HNCI, and KGSW…PVCK. 3 disulfide bridges follow: Cys28/Cys52, Cys39/Cys68, and Cys53/Cys71. C-linked (Man) tryptophan glycosylation is found at Trp79 and Trp82. 7 disulfide bridges follow: Cys85-Cys123, Cys89-Cys129, Cys100-Cys107, Cys128-Cys166, Cys144-Cys180, Cys148-Cys186, and Cys159-Cys170. C-linked (Man) tryptophan glycans are attached at residues Trp135, Trp138, and Trp141. The O-linked (Fuc...) threonine glycan is linked to Thr147. C-linked (Man) tryptophan glycans are attached at residues Trp192, Trp195, and Trp198. 3 cysteine pairs are disulfide-bonded: Cys201–Cys244, Cys205–Cys250, and Cys220–Cys234. O-linked (Fuc...) serine glycosylation is present at Ser204. Trp256 and Trp259 each carry a C-linked (Man) tryptophan glycan. Disulfide bonds link Cys265–Cys302, Cys269–Cys308, and Cys280–Cys292. A glycan (O-linked (Fuc...) threonine) is linked at Thr268. 2 C-linked (Man) tryptophan glycosylation sites follow: Trp317 and Trp320. Intrachain disulfides connect Cys323–Cys365, Cys332–Cys371, and Cys345–Cys355. Residues 346-354 are interaction with Complement C3 beta chain; that stretch reads GGRKFNGKP. Residues Trp377, Trp380, and Trp383 are each glycosylated (C-linked (Man) tryptophan). 3 disulfide bridges follow: Cys386–Cys450, Cys390–Cys456, and Cys402–Cys434. Residue Asn423 is glycosylated (N-linked (GlcNAc...) asparagine).

As to quaternary structure, in plasma, properdin exists as dimers, trimers or tetramers in the relative proportions of 26:54:20. Interacts with the pro-C3-convertase enzyme complex (C3b-Bb) comprised of Complement C3 beta chain (C3b) and the Complement factor B Bb fragment (Bb), where it binds (via its TSP type-1 5 domain) with C3b and Bb. This interaction stabilizes the complex and allows it to become the active C3-convertase enzyme complex (C3b-Bb-FP). Interacts with C3b. Interacts with CFB.

It localises to the secreted. Its function is as follows. A positive regulator of the alternate pathway of complement. It binds to and stabilizes the C3- and C5-convertase enzyme complexes. Inhibits CFI-CFH mediated degradation of Inhibits CFI-CFH mediated degradation of Complement C3 beta chain (C3b). The chain is Properdin (Cfp) from Mus musculus (Mouse).